Consider the following 294-residue polypeptide: 4-hydroxy-tetrahydrodipicolinate synthase (294 aa).

Thr47 is a binding site for pyruvate. Catalysis depends on Tyr135, which acts as the Proton donor/acceptor. Residue Lys163 is the Schiff-base intermediate with substrate of the active site. A pyruvate-binding site is contributed by Ile205.

Belongs to the DapA family. Homotetramer; dimer of dimers.

It is found in the cytoplasm. It catalyses the reaction L-aspartate 4-semialdehyde + pyruvate = (2S,4S)-4-hydroxy-2,3,4,5-tetrahydrodipicolinate + H2O + H(+). It functions in the pathway amino-acid biosynthesis; L-lysine biosynthesis via DAP pathway; (S)-tetrahydrodipicolinate from L-aspartate: step 3/4. Its function is as follows. Catalyzes the condensation of (S)-aspartate-beta-semialdehyde [(S)-ASA] and pyruvate to 4-hydroxy-tetrahydrodipicolinate (HTPA). The chain is 4-hydroxy-tetrahydrodipicolinate synthase from Rickettsia typhi (strain ATCC VR-144 / Wilmington).